The following is a 421-amino-acid chain: uncharacterized protein (421 aa).

2 coiled-coil regions span residues 126-182 (YART…IQKI) and 328-397 (YQVE…RLTL).

This is an uncharacterized protein from Treponema pallidum (strain Nichols).